A 259-amino-acid polypeptide reads, in one-letter code: Aliphatic sulfonates import ATP-binding protein SsuB 2 (259 aa).

Residues Leu-17–Ile-238 form the ABC transporter domain. Gly-49–Ser-56 is an ATP binding site.

Belongs to the ABC transporter superfamily. Aliphatic sulfonates importer (TC 3.A.1.17.2) family. The complex is composed of two ATP-binding proteins (SsuB), two transmembrane proteins (SsuC) and a solute-binding protein (SsuA).

The protein localises to the cell inner membrane. The catalysed reaction is ATP + H2O + aliphatic sulfonate-[sulfonate-binding protein]Side 1 = ADP + phosphate + aliphatic sulfonateSide 2 + [sulfonate-binding protein]Side 1.. Functionally, part of the ABC transporter complex SsuABC involved in aliphatic sulfonates import. Responsible for energy coupling to the transport system. This Agrobacterium fabrum (strain C58 / ATCC 33970) (Agrobacterium tumefaciens (strain C58)) protein is Aliphatic sulfonates import ATP-binding protein SsuB 2.